A 615-amino-acid polypeptide reads, in one-letter code: Dihydroxy-acid dehydratase (615 aa).

Aspartate 81 contributes to the Mg(2+) binding site. Residue cysteine 122 participates in [2Fe-2S] cluster binding. Mg(2+)-binding residues include aspartate 123 and lysine 124. The residue at position 124 (lysine 124) is an N6-carboxylysine. A [2Fe-2S] cluster-binding site is contributed by cysteine 197. A Mg(2+)-binding site is contributed by glutamate 494. Serine 520 functions as the Proton acceptor in the catalytic mechanism.

It belongs to the IlvD/Edd family. In terms of assembly, homodimer. [2Fe-2S] cluster serves as cofactor. The cofactor is Mg(2+).

It catalyses the reaction (2R)-2,3-dihydroxy-3-methylbutanoate = 3-methyl-2-oxobutanoate + H2O. It carries out the reaction (2R,3R)-2,3-dihydroxy-3-methylpentanoate = (S)-3-methyl-2-oxopentanoate + H2O. The protein operates within amino-acid biosynthesis; L-isoleucine biosynthesis; L-isoleucine from 2-oxobutanoate: step 3/4. Its pathway is amino-acid biosynthesis; L-valine biosynthesis; L-valine from pyruvate: step 3/4. Functionally, functions in the biosynthesis of branched-chain amino acids. Catalyzes the dehydration of (2R,3R)-2,3-dihydroxy-3-methylpentanoate (2,3-dihydroxy-3-methylvalerate) into 2-oxo-3-methylpentanoate (2-oxo-3-methylvalerate) and of (2R)-2,3-dihydroxy-3-methylbutanoate (2,3-dihydroxyisovalerate) into 2-oxo-3-methylbutanoate (2-oxoisovalerate), the penultimate precursor to L-isoleucine and L-valine, respectively. This Salinispora arenicola (strain CNS-205) protein is Dihydroxy-acid dehydratase.